A 90-amino-acid chain; its full sequence is Small ribosomal subunit protein bS18 (90 aa).

It belongs to the bacterial ribosomal protein bS18 family. Part of the 30S ribosomal subunit. Forms a tight heterodimer with protein bS6.

Functionally, binds as a heterodimer with protein bS6 to the central domain of the 16S rRNA, where it helps stabilize the platform of the 30S subunit. This is Small ribosomal subunit protein bS18 from Porphyromonas gingivalis (strain ATCC 33277 / DSM 20709 / CIP 103683 / JCM 12257 / NCTC 11834 / 2561).